The chain runs to 259 residues: Ribosomal RNA small subunit methyltransferase A (259 aa).

S-adenosyl-L-methionine contacts are provided by Asn-13, Leu-15, Gly-40, Glu-61, Asp-85, and Asn-103.

It belongs to the class I-like SAM-binding methyltransferase superfamily. rRNA adenine N(6)-methyltransferase family. RsmA subfamily.

It localises to the cytoplasm. It catalyses the reaction adenosine(1518)/adenosine(1519) in 16S rRNA + 4 S-adenosyl-L-methionine = N(6)-dimethyladenosine(1518)/N(6)-dimethyladenosine(1519) in 16S rRNA + 4 S-adenosyl-L-homocysteine + 4 H(+). Specifically dimethylates two adjacent adenosines (A1518 and A1519) in the loop of a conserved hairpin near the 3'-end of 16S rRNA in the 30S particle. May play a critical role in biogenesis of 30S subunits. This is Ribosomal RNA small subunit methyltransferase A from Neisseria gonorrhoeae (strain ATCC 700825 / FA 1090).